We begin with the raw amino-acid sequence, 351 residues long: Auxin-responsive protein IAA27 (351 aa).

Positions 1 to 37 (MMNLISFETPPLGRRSQDGGSSSSSITAATTTTNKAK) are disordered. The segment covering 21–34 (SSSSSITAATTTTN) has biased composition (low complexity). The region spanning 233–327 (NMFAKVHMDG…SAKRLYIAKN (95 aa)) is the PB1 domain.

It belongs to the Aux/IAA family. Homodimers and heterodimers. Expressed in roots and seedlings.

The protein localises to the nucleus. In terms of biological role, aux/IAA proteins are short-lived transcriptional factors that function as repressors of early auxin response genes at low auxin concentrations. This is Auxin-responsive protein IAA27 (IAA27) from Oryza sativa subsp. japonica (Rice).